Here is a 333-residue protein sequence, read N- to C-terminus: Nucleoid-associated protein HAPS_0704 (333 aa).

This sequence belongs to the YejK family.

It is found in the cytoplasm. Its subcellular location is the nucleoid. The sequence is that of Nucleoid-associated protein HAPS_0704 from Glaesserella parasuis serovar 5 (strain SH0165) (Haemophilus parasuis).